The primary structure comprises 260 residues: Small ribosomal subunit protein uS2 (260 aa).

This sequence belongs to the universal ribosomal protein uS2 family.

The chain is Small ribosomal subunit protein uS2 from Mesorhizobium japonicum (strain LMG 29417 / CECT 9101 / MAFF 303099) (Mesorhizobium loti (strain MAFF 303099)).